The sequence spans 348 residues: Holliday junction branch migration complex subunit RuvB (348 aa).

Positions 4–184 (TDRLIAASGR…FGIVQRLEFY (181 aa)) are large ATPase domain (RuvB-L). ATP contacts are provided by residues Ile-23, Arg-24, Gly-65, Lys-68, Thr-69, Thr-70, 131 to 133 (EDF), Arg-174, Tyr-184, and Arg-221. Residue Thr-69 coordinates Mg(2+). The interval 185–255 (SNKDLATIVS…VADMALNLLD (71 aa)) is small ATPAse domain (RuvB-S). Residues 258–348 (ERGFDHSDRR…GGEYAAQDDE (91 aa)) are head domain (RuvB-H). Arg-294, Arg-313, and Arg-318 together coordinate DNA.

It belongs to the RuvB family. As to quaternary structure, homohexamer. Forms an RuvA(8)-RuvB(12)-Holliday junction (HJ) complex. HJ DNA is sandwiched between 2 RuvA tetramers; dsDNA enters through RuvA and exits via RuvB. An RuvB hexamer assembles on each DNA strand where it exits the tetramer. Each RuvB hexamer is contacted by two RuvA subunits (via domain III) on 2 adjacent RuvB subunits; this complex drives branch migration. In the full resolvosome a probable DNA-RuvA(4)-RuvB(12)-RuvC(2) complex forms which resolves the HJ.

It is found in the cytoplasm. The catalysed reaction is ATP + H2O = ADP + phosphate + H(+). The RuvA-RuvB-RuvC complex processes Holliday junction (HJ) DNA during genetic recombination and DNA repair, while the RuvA-RuvB complex plays an important role in the rescue of blocked DNA replication forks via replication fork reversal (RFR). RuvA specifically binds to HJ cruciform DNA, conferring on it an open structure. The RuvB hexamer acts as an ATP-dependent pump, pulling dsDNA into and through the RuvAB complex. RuvB forms 2 homohexamers on either side of HJ DNA bound by 1 or 2 RuvA tetramers; 4 subunits per hexamer contact DNA at a time. Coordinated motions by a converter formed by DNA-disengaged RuvB subunits stimulates ATP hydrolysis and nucleotide exchange. Immobilization of the converter enables RuvB to convert the ATP-contained energy into a lever motion, pulling 2 nucleotides of DNA out of the RuvA tetramer per ATP hydrolyzed, thus driving DNA branch migration. The RuvB motors rotate together with the DNA substrate, which together with the progressing nucleotide cycle form the mechanistic basis for DNA recombination by continuous HJ branch migration. Branch migration allows RuvC to scan DNA until it finds its consensus sequence, where it cleaves and resolves cruciform DNA. This chain is Holliday junction branch migration complex subunit RuvB, found in Pseudomonas entomophila (strain L48).